A 109-amino-acid chain; its full sequence is Probable guanidinium efflux system subunit GdnC (109 aa).

4 consecutive transmembrane segments (helical) span residues 3 to 23 (WGSV…LKHA), 26 to 46 (ALEW…LVKA), 55 to 75 (VYAV…IALF), and 81 to 101 (IAKL…KLVT).

The protein belongs to the drug/metabolite transporter (DMT) superfamily. Small multidrug resistance (SMR) (TC 2.A.7.1) family. YkkC/YkkD subfamily. In terms of assembly, the efflux pump is composed of GdnC and GdnD.

The protein localises to the cell membrane. Functionally, probably involved in guanidinium transport. This is Probable guanidinium efflux system subunit GdnC from Bacillus licheniformis (strain ATCC 14580 / DSM 13 / JCM 2505 / CCUG 7422 / NBRC 12200 / NCIMB 9375 / NCTC 10341 / NRRL NRS-1264 / Gibson 46).